A 371-amino-acid polypeptide reads, in one-letter code: L-lysine 4-hydroxylase (371 aa).

Positions 174, 176, and 310 each coordinate Fe cation.

It belongs to the clavaminate synthase family. Requires Fe(2+) as cofactor.

The catalysed reaction is L-lysine + 2-oxoglutarate + O2 = (4R)-4-hydroxy-L-lysine + succinate + CO2. In terms of biological role, alpha-ketoglutarate-dependent dioxygenase that in vitro catalyzes the regio- and stereoselective hydroxylation of L-lysine, leading to (4R)-4-hydroxy-L-lysine. In Niastella koreensis (strain DSM 17620 / KACC 11465 / NBRC 106392 / GR20-10), this protein is L-lysine 4-hydroxylase.